The chain runs to 383 residues: Odorant receptor 94b (383 aa).

At Met1–Tyr41 the chain is on the cytoplasmic side. The chain crosses the membrane as a helical span at residues Pro42–Ile62. At Thr63 to Ala70 the chain is on the extracellular side. The chain crosses the membrane as a helical span at residues Gly71–Trp91. The Cytoplasmic portion of the chain corresponds to Tyr92 to Arg130. Residues Ile131–Phe151 traverse the membrane as a helical segment. Residues Phe152–Tyr174 are Extracellular-facing. The chain crosses the membrane as a helical span at residues Phe175 to Leu195. Residues Asp196–Glu250 are Cytoplasmic-facing. Residues Val251–Ser271 traverse the membrane as a helical segment. The Extracellular segment spans residues Ala272 to Pro284. A helical transmembrane segment spans residues Gly285–Cys305. Topologically, residues Tyr306–Glu358 are cytoplasmic. The helical transmembrane segment at Ile359–Leu379 threads the bilayer. The Extracellular portion of the chain corresponds to Lys380–Lys383.

This sequence belongs to the insect chemoreceptor superfamily. Heteromeric odorant receptor channel (TC 1.A.69) family. Or2a subfamily. Interacts with Orco. Complexes exist early in the endomembrane system in olfactory sensory neurons (OSNs), coupling these complexes to the conserved ciliary trafficking pathway.

The protein localises to the cell membrane. Its function is as follows. Odorant receptor which mediates acceptance or avoidance behavior, depending on its substrates. The odorant receptor repertoire encodes a large collection of odor stimuli that vary widely in identity, intensity, and duration. May form a complex with Orco to form odorant-sensing units, providing sensitive and prolonged odorant signaling and calcium permeability. This chain is Odorant receptor 94b (Or94b), found in Drosophila melanogaster (Fruit fly).